A 287-amino-acid chain; its full sequence is Uroplakin-3a (287 aa).

The N-terminal stretch at 1 to 18 (MLLLWALLALGCLRCGWT) is a signal peptide. At 19–207 (VNLQPQLASV…DTWPGRRSGG (189 aa)) the chain is on the lumenal side. N-linked (GlcNAc...) asparagine glycans are attached at residues Asn-74, Asn-139, and Asn-170. Residues 208 to 235 (MIVITSILGSLPFFLLVGFAGAIILSFV) form a helical membrane-spanning segment. Topologically, residues 236–287 (DMGSSDGEMTHDSQITQEAVPKTLGTSEPSYSSVNRGPPLDRAEVFSSKLQD) are cytoplasmic. Residues 243–287 (EMTHDSQITQEAVPKTLGTSEPSYSSVNRGPPLDRAEVFSSKLQD) are disordered. Polar residues predominate over residues 259 to 270 (LGTSEPSYSSVN).

The protein belongs to the uroplakin-3 family. As to quaternary structure, heterodimer with uroplakin-1B (UPK1B).

It localises to the endoplasmic reticulum membrane. In terms of biological role, component of the asymmetric unit membrane (AUM); a highly specialized biomembrane elaborated by terminally differentiated urothelial cells. May play an important role in AUM-cytoskeleton interaction in terminally differentiated urothelial cells. It also contributes to the formation of urothelial glycocalyx which may play an important role in preventing bacterial adherence. The polypeptide is Uroplakin-3a (Upk3a) (Mus musculus (Mouse)).